Consider the following 474-residue polypeptide: Polyamine oxidase 7 (474 aa).

Residues 1–27 form the signal peptide; it reads MTKPTTMAIFLSIVLLSMAQLPSLVAG. The FAD site is built by E61 and R69. N-linked (GlcNAc...) asparagine glycans are attached at residues N103 and N150. V261 provides a ligand contact to FAD. N278 carries an N-linked (GlcNAc...) asparagine glycan. Position 454 (E454) interacts with FAD.

The protein belongs to the flavin monoamine oxidase family. FAD serves as cofactor.

It localises to the secreted. It is found in the extracellular space. The protein localises to the apoplast. The catalysed reaction is spermine + O2 + H2O = 3-aminopropanal + spermidine + H2O2. It catalyses the reaction N(1)-acetylspermine + O2 + H2O = 3-acetamidopropanal + spermidine + H2O2. The enzyme catalyses norspermine + O2 + H2O = norspermidine + 3-aminopropanal + H2O2. It carries out the reaction spermidine + O2 + H2O = 3-aminopropanal + putrescine + H2O2. The catalysed reaction is N(1)-acetylspermidine + O2 + H2O = 3-acetamidopropanal + putrescine + H2O2. It catalyses the reaction thermospermine + O2 + H2O = 3-aminopropanal + spermidine + H2O2. Its pathway is amine and polyamine degradation; spermidine degradation. It functions in the pathway amine and polyamine degradation; spermine degradation. Its function is as follows. Flavoenzyme involved in polyamine back-conversion. Catalyzes the oxidation of the secondary amino group of polyamines, such as spermine, spermidine and their acetyl derivatives. Substrate preference is spermine &gt; spermidine &gt; N(1)-acetylspermine &gt; N(1)-acetylspermidine &gt; norspermine &gt; thermospermine. No activity detected when putrescine is used as substrate. May play a role in producing hydrogen peroxide for secondary wall thickening through lignin formation during anther development. In Oryza sativa subsp. japonica (Rice), this protein is Polyamine oxidase 7.